Consider the following 692-residue polypeptide: ABC1 family protein C21C3.03, mitochondrial (692 aa).

The transit peptide at 1–91 (MISFSHWNSH…RKFTTRQKSE (91 aa)) directs the protein to the mitochondrion. The next 2 membrane-spanning stretches (helical) occupy residues 96 to 116 (WRIL…LWIL) and 161 to 181 (LFII…ISFL).

This sequence belongs to the protein kinase superfamily. ADCK protein kinase family.

It localises to the mitochondrion membrane. The polypeptide is ABC1 family protein C21C3.03, mitochondrial (Schizosaccharomyces pombe (strain 972 / ATCC 24843) (Fission yeast)).